Here is a 325-residue protein sequence, read N- to C-terminus: Undecaprenyl-phosphate 4-deoxy-4-formamido-L-arabinose transferase (325 aa).

The next 2 membrane-spanning stretches (helical) occupy residues 235–255 and 269–291; these read LSVVGSVIAVSGFLLAVLLMV and VFTLFALLFIFIGAQFVAMGLLG.

The protein belongs to the glycosyltransferase 2 family.

The protein localises to the cell inner membrane. It carries out the reaction UDP-4-deoxy-4-formamido-beta-L-arabinose + di-trans,octa-cis-undecaprenyl phosphate = 4-deoxy-4-formamido-alpha-L-arabinopyranosyl di-trans,octa-cis-undecaprenyl phosphate + UDP. The protein operates within glycolipid biosynthesis; 4-amino-4-deoxy-alpha-L-arabinose undecaprenyl phosphate biosynthesis; 4-amino-4-deoxy-alpha-L-arabinose undecaprenyl phosphate from UDP-4-deoxy-4-formamido-beta-L-arabinose and undecaprenyl phosphate: step 1/2. It functions in the pathway bacterial outer membrane biogenesis; lipopolysaccharide biosynthesis. Functionally, catalyzes the transfer of 4-deoxy-4-formamido-L-arabinose from UDP to undecaprenyl phosphate. The modified arabinose is attached to lipid A and is required for resistance to polymyxin and cationic antimicrobial peptides. Essential for virulence in insects. The protein is Undecaprenyl-phosphate 4-deoxy-4-formamido-L-arabinose transferase of Photorhabdus laumondii subsp. laumondii (strain DSM 15139 / CIP 105565 / TT01) (Photorhabdus luminescens subsp. laumondii).